Consider the following 440-residue polypeptide: Light-independent protochlorophyllide reductase subunit B (440 aa).

Asp-36 contributes to the [4Fe-4S] cluster binding site. Lys-427 to Asp-428 lines the substrate pocket.

Belongs to the ChlB/BchB/BchZ family. In terms of assembly, protochlorophyllide reductase is composed of three subunits; ChlL, ChlN and ChlB. Forms a heterotetramer of two ChlB and two ChlN subunits. [4Fe-4S] cluster is required as a cofactor.

It is found in the plastid. It localises to the cyanelle. It carries out the reaction chlorophyllide a + oxidized 2[4Fe-4S]-[ferredoxin] + 2 ADP + 2 phosphate = protochlorophyllide a + reduced 2[4Fe-4S]-[ferredoxin] + 2 ATP + 2 H2O. It participates in porphyrin-containing compound metabolism; chlorophyll biosynthesis (light-independent). Component of the dark-operative protochlorophyllide reductase (DPOR) that uses Mg-ATP and reduced ferredoxin to reduce ring D of protochlorophyllide (Pchlide) to form chlorophyllide a (Chlide). This reaction is light-independent. The NB-protein (ChlN-ChlB) is the catalytic component of the complex. This is Light-independent protochlorophyllide reductase subunit B from Cyanophora paradoxa.